Consider the following 313-residue polypeptide: 7,8-didemethyl-8-hydroxy-5-deazariboflavin synthase (313 aa).

The 232-residue stretch at 4–235 (ITYSPAYTLV…AEITLQIPPN (232 aa)) folds into the Radical SAM core domain. The [4Fe-4S] cluster site is built by Cys-18, Cys-22, and Cys-25.

Belongs to the radical SAM superfamily. CofG family. Consists of two subunits, CofG and CofH. The cofactor is [4Fe-4S] cluster.

It carries out the reaction 5-amino-5-(4-hydroxybenzyl)-6-(D-ribitylimino)-5,6-dihydrouracil + S-adenosyl-L-methionine = 7,8-didemethyl-8-hydroxy-5-deazariboflavin + 5'-deoxyadenosine + L-methionine + NH4(+) + H(+). The protein operates within cofactor biosynthesis; coenzyme F0 biosynthesis. Functionally, catalyzes the radical-mediated synthesis of 7,8-didemethyl-8-hydroxy-5-deazariboflavin from 5-amino-5-(4-hydroxybenzyl)-6-(D-ribitylimino)-5,6-dihydrouracil. This is 7,8-didemethyl-8-hydroxy-5-deazariboflavin synthase from Synechocystis sp. (strain ATCC 27184 / PCC 6803 / Kazusa).